The sequence spans 105 residues: MAKLRKGDNVIVIAGKDKGKQGTVLAVKNDRIKVEGINIVTKHQKPNAATGAEGGIVKQEAFLHISNVAIFNAQTQKADRITYQFDDEGNKKRVYRSNGEVVATA.

This sequence belongs to the universal ribosomal protein uL24 family. As to quaternary structure, part of the 50S ribosomal subunit.

Its function is as follows. One of two assembly initiator proteins, it binds directly to the 5'-end of the 23S rRNA, where it nucleates assembly of the 50S subunit. In terms of biological role, one of the proteins that surrounds the polypeptide exit tunnel on the outside of the subunit. The protein is Large ribosomal subunit protein uL24 of Psychrobacter sp. (strain PRwf-1).